The sequence spans 350 residues: S-adenosylmethionine:tRNA ribosyltransferase-isomerase (350 aa).

The protein belongs to the QueA family. As to quaternary structure, monomer.

It localises to the cytoplasm. The enzyme catalyses 7-aminomethyl-7-carbaguanosine(34) in tRNA + S-adenosyl-L-methionine = epoxyqueuosine(34) in tRNA + adenine + L-methionine + 2 H(+). It functions in the pathway tRNA modification; tRNA-queuosine biosynthesis. Transfers and isomerizes the ribose moiety from AdoMet to the 7-aminomethyl group of 7-deazaguanine (preQ1-tRNA) to give epoxyqueuosine (oQ-tRNA). The polypeptide is S-adenosylmethionine:tRNA ribosyltransferase-isomerase (Bacillus cereus (strain Q1)).